Reading from the N-terminus, the 195-residue chain is dCTP deaminase (195 aa).

DCTP contacts are provided by residues 110 to 115 (RSSLAR), D128, 136 to 138 (VLE), Y171, K178, and Q182. The Proton donor/acceptor role is filled by E138. Basic and acidic residues predominate over residues 169–179 (RPYSSRKDAKY). The interval 169–195 (RPYSSRKDAKYKNQQSAVASRIDEDKE) is disordered.

This sequence belongs to the dCTP deaminase family. As to quaternary structure, homotrimer.

The catalysed reaction is dCTP + H2O + H(+) = dUTP + NH4(+). Its pathway is pyrimidine metabolism; dUMP biosynthesis; dUMP from dCTP (dUTP route): step 1/2. Functionally, catalyzes the deamination of dCTP to dUTP. In Haemophilus influenzae (strain 86-028NP), this protein is dCTP deaminase.